A 915-amino-acid chain; its full sequence is Probable dipeptidyl-aminopeptidase B (915 aa).

2 disordered regions span residues 1–20 (MAGE…TRGS) and 52–74 (QDSR…NEEE). Topologically, residues 1-95 (MAGEKGGSRD…GGKTVQKTTK (95 aa)) are cytoplasmic. Positions 55 to 72 (RLGEKDQRDDDHDQYRNE) are enriched in basic and acidic residues. A helical; Signal-anchor for type II membrane protein membrane pass occupies residues 96–116 (IVLWALLFLCVGGWSLAFVIF). Residues 117–915 (LFRGHDTPQT…RAETWGGLPV (799 aa)) are Vacuolar-facing. 4 N-linked (GlcNAc...) asparagine glycosylation sites follow: asparagine 133, asparagine 179, asparagine 349, and asparagine 572. Serine 754 serves as the catalytic Charge relay system. An N-linked (GlcNAc...) asparagine glycan is attached at asparagine 813. Residues aspartate 831 and histidine 864 each act as charge relay system in the active site. An N-linked (GlcNAc...) asparagine glycan is attached at asparagine 900.

The protein belongs to the peptidase S9B family.

The protein resides in the vacuole membrane. It carries out the reaction Release of an N-terminal dipeptide, Xaa-Yaa-|-Zaa-, from a polypeptide, preferentially when Yaa is Pro, provided Zaa is neither Pro nor hydroxyproline.. In terms of biological role, type IV dipeptidyl-peptidase which removes N-terminal dipeptides sequentially from polypeptides having unsubstituted N-termini provided that the penultimate residue is proline. The protein is Probable dipeptidyl-aminopeptidase B (DAPB) of Blastomyces gilchristii (strain SLH14081) (Blastomyces dermatitidis).